The sequence spans 37 residues: Lambda-hexatoxin-Hv1c (37 aa).

4 cysteine pairs are disulfide-bonded: cysteine 3/cysteine 17, cysteine 10/cysteine 22, cysteine 13/cysteine 14, and cysteine 16/cysteine 32.

The protein belongs to the neurotoxin 11 (kappa toxin) family. As to expression, expressed by the venom gland.

Its subcellular location is the secreted. In terms of biological role, this excitatory toxin inhibits insect calcium-activated potassium (KCa) channels (Slo-type). Pan-neuronal expression in Drosophila is lethal but flies engineered to express the toxin only in clock neurons have defects in circadian rhythm but a normal lifespan. The polypeptide is Lambda-hexatoxin-Hv1c (Hadronyche versuta (Blue mountains funnel-web spider)).